A 430-amino-acid chain; its full sequence is MFARHPNLLWLNKQLSILHYLCLVFLAVYYAYPLLFGIMPRKLQLEDENSFVIMGVADPQIEGNHKIEANGFFKGTLDLWGNDLFLRHLVHMNQFWGQPDAMILLGDLVSFQHLDNEEFNKRAKRLKKITGAKNFWQVGNSSLPARTFENGNIPVWTIAGNHDIGYGCESSDAQISKWEQAMGPVNWVSHFNVSKFPVRVIGINSLSLDDVQFYDANPSDIINSKSFSSLGILALSKEARDAWQFLFDIALEPSIPTILFTHVPLYKPANVCVDEPRIVRQLDFRVKSQNHLSYNTTMKIFELIPSIKLVLSGHDHMGCDYEHPNGAIEHTLPSAMGYFGGNIGFVKLIATNDVLTESSKNTPSVVTFLIQKLIGQRWKKASLKQSKFSSDIYATYTLSHGGPSYIWWALHISVCVLTILRLLVISLQHI.

Transmembrane regions (helical) follow at residues 20-40 (YLCL…GIMP) and 405-425 (YIWW…LLVI).

It localises to the membrane. This is an uncharacterized protein from Schizosaccharomyces pombe (strain 972 / ATCC 24843) (Fission yeast).